We begin with the raw amino-acid sequence, 400 residues long: Large envelope protein (400 aa).

An N-acetylmethionine modification is found at methionine 1. Glycine 2 carries N-myristoyl glycine; by host lipidation. The interval 2–119 is pre-S1; the sequence is GAPLSTTRRG…PPLRDTHPQA (118 aa). Residues 2-174 are pre-S; the sequence is GAPLSTTRRG…FSKTGGPAMN (173 aa). Over 2 to 181 the chain is Virion surface; in external conformation; that stretch reads GAPLSTTRRG…AMNMDSITSG (180 aa). Residues 2–253 lie on the Intravirion; in internal conformation side of the membrane; that stretch reads GAPLSTTRRG…PGYRWMCLRR (252 aa). An N-linked (GlcNAc...) asparagine glycan is attached at proline 4. A disordered region spans residues 84–114; that stretch reads VLTTLPADPPPASTNRRSGRKPTPVSPPLRD. The pre-S2 stretch occupies residues 120 to 174; the sequence is MQWNSTQFHQALLDPRVRALYFPAGGSSSETQNPAPTIASLTSSIFSKTGGPAMN. A helical membrane pass occupies residues 182–202; the sequence is LLGPLLVLQAVCFLLTKILTI. The Intravirion; in external conformation segment spans residues 203 to 253; sequence PQSLDSWWTSLNFLGGLPGCPGQNSQSPTSNHLPTSCPPTCPGYRWMCLRR. A helical membrane pass occupies residues 254–274; the sequence is FIIFLFILLLCLIFLLVLLDY. The Virion surface segment spans residues 275-348; that stretch reads QGMLPVCPLI…WASARFSWLS (74 aa). Asparagine 320 carries N-linked (GlcNAc...) asparagine; by host glycosylation. Residues 349–369 traverse the membrane as a helical segment; the sequence is LLVQFVQWCVGLSPTVWLLVI. Residues 370–375 lie on the Intravirion side of the membrane; it reads WMIWYW. A helical transmembrane segment spans residues 376–398; that stretch reads GPNLCSILSPFIPLLPIFCYLWV. Topologically, residues 399–400 are virion surface; it reads SI.

The protein belongs to the orthohepadnavirus major surface antigen family. In terms of assembly, in its internal form (Li-HBsAg), interacts with the capsid protein and with the isoform S. Interacts with host chaperone CANX. As to quaternary structure, associates with host chaperone CANX through its pre-S2 N glycan; this association may be essential for isoform M proper secretion. Interacts with isoform L. Interacts with the antigens of satellite virus HDV (HDVAgs); this interaction is required for encapsidation of HDV genomic RNA. Post-translationally, isoform M is N-terminally acetylated by host at a ratio of 90%, and N-glycosylated by host at the pre-S2 region. Myristoylated.

It is found in the virion membrane. Functionally, the large envelope protein exists in two topological conformations, one which is termed 'external' or Le-HBsAg and the other 'internal' or Li-HBsAg. In its external conformation the protein attaches the virus to cell receptors and thereby initiating infection. This interaction determines the species specificity and liver tropism. This attachment induces virion internalization predominantly through caveolin-mediated endocytosis. The large envelope protein also assures fusion between virion membrane and endosomal membrane. In its internal conformation the protein plays a role in virion morphogenesis and mediates the contact with the nucleocapsid like a matrix protein. The middle envelope protein plays an important role in the budding of the virion. It is involved in the induction of budding in a nucleocapsid independent way. In this process the majority of envelope proteins bud to form subviral lipoprotein particles of 22 nm of diameter that do not contain a nucleocapsid. In Homo sapiens (Human), this protein is Large envelope protein.